The chain runs to 141 residues: MALERTLSIIKPDAVAKNVIGQIYSRFENAGLKIVAARMAHLSRADAEKFYAVHAERPFFKDLVDFMISGPVMIQVLEGEDAILKNRDLMGATDPKKAEKGTIRADFADSIDANAVHGSDAPETARAEVAFFFPEMNVYSR.

ATP-binding residues include K11, F59, R87, T93, R104, and N114. The Pros-phosphohistidine intermediate role is filled by H117.

Belongs to the NDK family. Homotetramer. Mg(2+) is required as a cofactor.

It is found in the cytoplasm. It catalyses the reaction a 2'-deoxyribonucleoside 5'-diphosphate + ATP = a 2'-deoxyribonucleoside 5'-triphosphate + ADP. It carries out the reaction a ribonucleoside 5'-diphosphate + ATP = a ribonucleoside 5'-triphosphate + ADP. In terms of biological role, major role in the synthesis of nucleoside triphosphates other than ATP. The ATP gamma phosphate is transferred to the NDP beta phosphate via a ping-pong mechanism, using a phosphorylated active-site intermediate. This Burkholderia mallei (strain NCTC 10247) protein is Nucleoside diphosphate kinase.